Here is a 362-residue protein sequence, read N- to C-terminus: Talin rod domain-containing protein 1 (362 aa).

The interval 1 to 27 is disordered; that stretch reads MASGSAGKPTGEAASPAPGSAVGGASS. Position 2 is an N-acetylalanine (alanine 2). Low complexity predominate over residues 9 to 27; the sequence is PTGEAASPAPGSAVGGASS.

May homodimerize. Interacts with F-actin. In terms of tissue distribution, ubiquitous.

In terms of biological role, actin-binding protein which may have an oncogenic function and regulates cell proliferation, migration and invasion in cancer cells. This chain is Talin rod domain-containing protein 1, found in Mus musculus (Mouse).